The sequence spans 553 residues: Dihydroxy-acid dehydratase (553 aa).

Residue D78 coordinates Mg(2+). C119 provides a ligand contact to [2Fe-2S] cluster. Residues D120 and K121 each coordinate Mg(2+). K121 bears the N6-carboxylysine mark. C192 lines the [2Fe-2S] cluster pocket. E442 provides a ligand contact to Mg(2+). The Proton acceptor role is filled by S468.

The protein belongs to the IlvD/Edd family. As to quaternary structure, homodimer. [2Fe-2S] cluster is required as a cofactor. Mg(2+) serves as cofactor.

The enzyme catalyses (2R)-2,3-dihydroxy-3-methylbutanoate = 3-methyl-2-oxobutanoate + H2O. It catalyses the reaction (2R,3R)-2,3-dihydroxy-3-methylpentanoate = (S)-3-methyl-2-oxopentanoate + H2O. Its pathway is amino-acid biosynthesis; L-isoleucine biosynthesis; L-isoleucine from 2-oxobutanoate: step 3/4. It functions in the pathway amino-acid biosynthesis; L-valine biosynthesis; L-valine from pyruvate: step 3/4. Its function is as follows. Functions in the biosynthesis of branched-chain amino acids. Catalyzes the dehydration of (2R,3R)-2,3-dihydroxy-3-methylpentanoate (2,3-dihydroxy-3-methylvalerate) into 2-oxo-3-methylpentanoate (2-oxo-3-methylvalerate) and of (2R)-2,3-dihydroxy-3-methylbutanoate (2,3-dihydroxyisovalerate) into 2-oxo-3-methylbutanoate (2-oxoisovalerate), the penultimate precursor to L-isoleucine and L-valine, respectively. This chain is Dihydroxy-acid dehydratase, found in Campylobacter hominis (strain ATCC BAA-381 / DSM 21671 / CCUG 45161 / LMG 19568 / NCTC 13146 / CH001A).